A 355-amino-acid polypeptide reads, in one-letter code: Probable L-aspartate decarboxylase (355 aa).

Lys210 carries the post-translational modification N6-(pyridoxal phosphate)lysine.

The protein belongs to the group II decarboxylase family. MfnA subfamily. The cofactor is pyridoxal 5'-phosphate.

The catalysed reaction is L-aspartate + H(+) = beta-alanine + CO2. It functions in the pathway cofactor biosynthesis; coenzyme A biosynthesis. Functionally, catalyzes the decarboxylation of L-aspartate to produce beta-alanine. The protein is Probable L-aspartate decarboxylase of Halobacterium salinarum (strain ATCC 29341 / DSM 671 / R1).